Reading from the N-terminus, the 329-residue chain is Trans-1,2-dihydrobenzene-1,2-diol dehydrogenase (329 aa).

It belongs to the Gfo/Idh/MocA family. As to quaternary structure, homodimer. Lens, liver and small intestine.

The catalysed reaction is (1R,2R)-1,2-dihydrobenzene-1,2-diol + NADP(+) = catechol + NADPH + H(+). It catalyses the reaction D-xylose + NADP(+) = D-xylono-1,5-lactone + NADPH + H(+). With respect to regulation, stimulated by various salts. The chain is Trans-1,2-dihydrobenzene-1,2-diol dehydrogenase (DHDH) from Oryctolagus cuniculus (Rabbit).